The sequence spans 216 residues: Uracil phosphoribosyltransferase (216 aa).

Residues Arg85, Arg110, and 135–143 (DPMVATGYS) each bind 5-phospho-alpha-D-ribose 1-diphosphate. Residues Ile200 and 205 to 207 (GDA) each bind uracil. A 5-phospho-alpha-D-ribose 1-diphosphate-binding site is contributed by Asp206.

It belongs to the UPRTase family. Requires Mg(2+) as cofactor.

It catalyses the reaction UMP + diphosphate = 5-phospho-alpha-D-ribose 1-diphosphate + uracil. It functions in the pathway pyrimidine metabolism; UMP biosynthesis via salvage pathway; UMP from uracil: step 1/1. Allosterically activated by GTP. In terms of biological role, catalyzes the conversion of uracil and 5-phospho-alpha-D-ribose 1-diphosphate (PRPP) to UMP and diphosphate. The polypeptide is Uracil phosphoribosyltransferase (Burkholderia ambifaria (strain ATCC BAA-244 / DSM 16087 / CCUG 44356 / LMG 19182 / AMMD) (Burkholderia cepacia (strain AMMD))).